The primary structure comprises 460 residues: Oxysterols receptor LXR-beta (460 aa).

Positions 1–14 are enriched in low complexity; the sequence is MSSPTTSSLDTPLP. Positions 1–78 are disordered; it reads MSSPTTSSLD…PERKRKKGPA (78 aa). Positions 1 to 85 are transactivation AF-1; required for ligand-independent transactivation function; the sequence is MSSPTTSSLD…GPAPKMLGHE (85 aa). Positions 36-45 are enriched in pro residues; that stretch reads EPWPGGPDPD. The segment at residues 84 to 161 is a DNA-binding region (nuclear receptor); sequence HELCRVCGDK…AGMREQCVLS (78 aa). NR C4-type zinc fingers lie at residues 87–107 and 125–149; these read CRVC…CEGC and CRGG…LRKC. The disordered stretch occupies residues 169 to 216; the sequence is KIRKQQQESQSQSQSPVGPQGSSSSASGPGASPGGSEAGSQGSGEGEG. Over residues 175-198 the composition is skewed to low complexity; sequence QESQSQSQSPVGPQGSSSSASGPG. Gly residues predominate over residues 199–215; sequence ASPGGSEAGSQGSGEGE. Residues 219–460 form a transactivation AF-2; required for ligand-dependent transactivation function; mediates interaction with CCAR2 region; sequence LTAAQELMIQ…LLSEIWDVHE (242 aa). Residues 222 to 460 enclose the NR LBD domain; it reads AQELMIQQLV…LLSEIWDVHE (239 aa). Glycyl lysine isopeptide (Lys-Gly) (interchain with G-Cter in SUMO2) cross-links involve residues Lys-409 and Lys-447.

This sequence belongs to the nuclear hormone receptor family. NR1 subfamily. Forms a heterodimer with RXR. Interacts with CCAR2 (via N-terminus) in a ligand-independent manner. Interacts (when sumoylated) with GPS2; interaction with GPS2 onto hepatic acute phase protein promoters prevents N-Cor corepressor complex dissociation. Interacts with ABCA12 and ABCA1; this interaction is required for ABCA1 localization to the cell surface and is necessary for its normal activity and stability. Sumoylated by SUMO2 at Lys-409 and Lys-447 during the hepatic acute phase response, leading to promote interaction with GPS2 and prevent N-Cor corepressor complex dissociation. As to expression, ubiquitous.

The protein resides in the nucleus. Functionally, nuclear receptor that exhibits a ligand-dependent transcriptional activation activity. Binds preferentially to double-stranded oligonucleotide direct repeats having the consensus half-site sequence 5'-AGGTCA-3' and 4-nt spacing (DR-4). Regulates cholesterol uptake through MYLIP-dependent ubiquitination of LDLR, VLDLR and LRP8; DLDLR and LRP8. Interplays functionally with RORA for the regulation of genes involved in liver metabolism. Induces LPCAT3-dependent phospholipid remodeling in endoplasmic reticulum (ER) membranes of hepatocytes, driving SREBF1 processing and lipogenesis. Via LPCAT3, triggers the incorporation of arachidonate into phosphatidylcholines of ER membranes, increasing membrane dynamics and enabling triacylglycerols transfer to nascent very low-density lipoprotein (VLDL) particles. Via LPCAT3 also counteracts lipid-induced ER stress response and inflammation, likely by modulating SRC kinase membrane compartmentalization and limiting the synthesis of lipid inflammatory mediators. Plays an anti-inflammatory role during the hepatic acute phase response by acting as a corepressor: inhibits the hepatic acute phase response by preventing dissociation of the N-Cor corepressor complex. The sequence is that of Oxysterols receptor LXR-beta (NR1H2) from Homo sapiens (Human).